Consider the following 92-residue polypeptide: MLKLNLQFFASKKGVGSTKNGRDSQSKRLGAKRADGQTVSAGSILYRQRGTKIHPGMNVGRGGDDTLFATATGVVRFERLGRDKKQVSVYPA.

The propeptide occupies M1–F9. The tract at residues G14–A34 is disordered.

Belongs to the bacterial ribosomal protein bL27 family. Post-translationally, the N-terminus is cleaved by ribosomal processing cysteine protease Prp.

This is Large ribosomal subunit protein bL27 from Exiguobacterium sibiricum (strain DSM 17290 / CCUG 55495 / CIP 109462 / JCM 13490 / 255-15).